Here is a 124-residue protein sequence, read N- to C-terminus: Small ribosomal subunit protein eS6 (124 aa).

Belongs to the eukaryotic ribosomal protein eS6 family.

The chain is Small ribosomal subunit protein eS6 from Methanococcus maripaludis (strain C7 / ATCC BAA-1331).